A 129-amino-acid chain; its full sequence is uncharacterized protein (129 aa).

An N-terminal signal peptide occupies residues 1–21 (MAQNKTIAVALLLATLVAVMG).

This is an uncharacterized protein from Oryza sativa subsp. japonica (Rice).